The primary structure comprises 606 residues: NADH-ubiquinone oxidoreductase chain 5 (606 aa).

The next 15 helical transmembrane spans lie at 3-23 (VINLIPTLTLTSLIILTLPIT), 38-58 (ITKMAVTCAFAISLIPTLLFL), 87-107 (FFSLTFMPIALFITWSIMEFS), 124-144 (LLLFLITMLILVSANNLLQLF), 180-200 (IGDMGFIMMMAWFIIHLNSWE), 216-236 (LLGLLLASAGKSAQFGLHPWL), 244-264 (TPVSALLHSSTMVMAGVFTLI), 276-296 (IQTSTLCLGAITTLFTAICAL), 304-323 (IIALSTSSQLGLMMVTIGIN), 328-350 (AFTHMCTHAFFKAMLFLSSGSII), 369-389 (MPITSTAIIIGSLALTGMPFL), 404-424 (MSYINTWALLITLIAVSMTAS), 460-480 (LILGSIFMGFFISMNTIPHTT), 483-503 (MTMPPHLKFMALAVTLLGFTV), and 586-606 (LMKLYFLSFLLSITLGLLITL).

Belongs to the complex I subunit 5 family. In terms of assembly, core subunit of respiratory chain NADH dehydrogenase (Complex I) which is composed of 45 different subunits.

The protein localises to the mitochondrion inner membrane. It carries out the reaction a ubiquinone + NADH + 5 H(+)(in) = a ubiquinol + NAD(+) + 4 H(+)(out). Its function is as follows. Core subunit of the mitochondrial membrane respiratory chain NADH dehydrogenase (Complex I) which catalyzes electron transfer from NADH through the respiratory chain, using ubiquinone as an electron acceptor. Essential for the catalytic activity and assembly of complex I. In Elephas maximus (Indian elephant), this protein is NADH-ubiquinone oxidoreductase chain 5 (MT-ND5).